The chain runs to 434 residues: Na(+)/H(+) antiporter NhaA 1 (434 aa).

Pro residues predominate over residues 1-15 (MISPNPALPTPPHAP). Positions 1-21 (MISPNPALPTPPHAPTAPGRG) are disordered. Transmembrane regions (helical) follow at residues 34-54 (GGIL…SPAA), 74-94 (LSVS…VVGL), 112-132 (ALPI…FTLI), 143-163 (GWAI…AVVG), 173-193 (FLLT…AVFY), 196-216 (GIAF…GILV), 222-242 (AWYV…ASGI), 245-265 (TIAG…RAGV), 294-314 (IAVP…LEGL), 326-346 (IIVA…LLVA), 362-382 (VLGL…VGEL), and 393-413 (AVKV…GTLL).

The protein belongs to the NhaA Na(+)/H(+) (TC 2.A.33) antiporter family.

Its subcellular location is the cell membrane. The enzyme catalyses Na(+)(in) + 2 H(+)(out) = Na(+)(out) + 2 H(+)(in). In terms of biological role, na(+)/H(+) antiporter that extrudes sodium in exchange for external protons. This chain is Na(+)/H(+) antiporter NhaA 1, found in Clavibacter michiganensis subsp. michiganensis (strain NCPPB 382).